The chain runs to 475 residues: Lipoprotein lipase (475 aa).

The signal sequence occupies residues 1–27 (MESKALLLVALGMWFQSLTATRGGVAA). Positions 32-53 (GDFIDIESKFALRTPEDTAEDT) are interaction with GPIHBP1. A disulfide bridge connects residues cysteine 54 and cysteine 67. Asparagine 70 is a glycosylation site (N-linked (GlcNAc...) asparagine). Tyrosine 121 carries the 3'-nitrotyrosine modification. The active-site Nucleophile is the serine 159. Aspartate 183 acts as the Charge relay system in catalysis. Tyrosine 191 is subject to 3'-nitrotyrosine. Ca(2+) is bound by residues alanine 194, arginine 197, serine 199, and aspartate 202. An intrachain disulfide couples cysteine 243 to cysteine 266. The active-site Charge relay system is the histidine 268. Cystine bridges form between cysteine 291-cysteine 310 and cysteine 302-cysteine 305. In terms of domain architecture, PLAT spans 341-464 (FHYQVKIHFS…KGKASVVFVK (124 aa)). Tyrosine 343 carries the post-translational modification 3'-nitrotyrosine. An N-linked (GlcNAc...) asparagine glycan is attached at asparagine 386. The segment at 417–421 (WSDWW) is important for interaction with lipoprotein particles. Residues 430–434 (KIRVK) form an important for heparin binding region. An interaction with GPIHBP1 region spans residues 443–467 (IFCSREKVSHLQKGKASVVFVKCHD). Cysteine 445 and cysteine 465 are joined by a disulfide.

Belongs to the AB hydrolase superfamily. Lipase family. In terms of assembly, homodimer. Interacts with GPIHBP1 with 1:1 stoichiometry. Interacts with APOC2; the interaction activates LPL activity in the presence of lipids. Interaction with heparan sulfate proteoglycans is required to protect LPL against loss of activity. Associates with lipoprotein particles in blood plasma. Interacts with LMF1 and SEL1L; interaction with SEL1L is required to prevent aggregation of newly synthesized LPL in the endoplasmic reticulum (ER), and for normal export of LPL from the ER to the extracellular space. Interacts with SORL1; SORL1 acts as a sorting receptor, promoting LPL localization to endosomes and later to lysosomes, leading to degradation of newly synthesized LPL. Tyrosine nitration after lipopolysaccharide (LPS) challenge down-regulates the lipase activity.

The protein resides in the cell membrane. Its subcellular location is the secreted. It localises to the extracellular space. The protein localises to the extracellular matrix. The enzyme catalyses a triacylglycerol + H2O = a diacylglycerol + a fatty acid + H(+). Its activity is regulated as follows. The apolipoprotein APOC2 acts as a coactivator of LPL activity. Ca(2+) binding promotes protein stability and formation of the active homodimer. Interaction with GPIHBP1 protects LPL against inactivation by ANGPTL4. Functionally, key enzyme in triglyceride metabolism. Catalyzes the hydrolysis of triglycerides from circulating chylomicrons and very low density lipoproteins (VLDL), and thereby plays an important role in lipid clearance from the blood stream, lipid utilization and storage. Mediates margination of triglyceride-rich lipoprotein particles in capillaries. Recruited to its site of action on the luminal surface of vascular endothelium by binding to GPIHBP1 and cell surface heparan sulfate proteoglycans. This chain is Lipoprotein lipase (LPL), found in Neovison vison (American mink).